We begin with the raw amino-acid sequence, 428 residues long: MRFLTGNVVVRARGADFFVAIDARSAGGADAWLALTNGAPLLRRFTLSPSAPTNLYDFTRAELRLWLSRRELNPVHAARIWSYLYLDLVEGFGAMTELPARVRARLEAEMCVGNLKIARETDSRDGFTRKYLLELADGAAIETVLMRFAGRATACVSSQVGCAMGCVFCATGQMGYTRHLTAGEIVAQAVHVARALRTAAFEKCHVMRDPSPGREAGEKSRDEADRHRAPPTPRLRNLVLMGMGEPLHNYEAVMRAVDILRDDGGLALGAERITLSTVGVVPGILRLAAEKRPVHLAVSLHAADQEERAALVPVAKKWPLDELMAACRTYSETTGRRVFYEWTLIEGRNDTAAHARAVGRLLRGLPAQVNLIPLNPTAGYDGTPGRTEAARRFQEILSREFALPSTVRQRRGIDIAAGCGQLAVAEQS.

Catalysis depends on E142, which acts as the Proton acceptor. Positions 148–414 constitute a Radical SAM core domain; that stretch reads FAGRATACVS…STVRQRRGID (267 aa). Residues C155 and C419 are joined by a disulfide bond. Residues C162, C166, and C169 each contribute to the [4Fe-4S] cluster site. Residues 207-228 show a composition bias toward basic and acidic residues; the sequence is MRDPSPGREAGEKSRDEADRHR. Residues 207 to 232 form a disordered region; the sequence is MRDPSPGREAGEKSRDEADRHRAPPT. S-adenosyl-L-methionine is bound by residues 244–245, S276, 299–301, and N375; these read GE and SLH. The active-site S-methylcysteine intermediate is C419.

It belongs to the radical SAM superfamily. RlmN family. It depends on [4Fe-4S] cluster as a cofactor.

The protein localises to the cytoplasm. The enzyme catalyses adenosine(2503) in 23S rRNA + 2 reduced [2Fe-2S]-[ferredoxin] + 2 S-adenosyl-L-methionine = 2-methyladenosine(2503) in 23S rRNA + 5'-deoxyadenosine + L-methionine + 2 oxidized [2Fe-2S]-[ferredoxin] + S-adenosyl-L-homocysteine. It catalyses the reaction adenosine(37) in tRNA + 2 reduced [2Fe-2S]-[ferredoxin] + 2 S-adenosyl-L-methionine = 2-methyladenosine(37) in tRNA + 5'-deoxyadenosine + L-methionine + 2 oxidized [2Fe-2S]-[ferredoxin] + S-adenosyl-L-homocysteine. In terms of biological role, specifically methylates position 2 of adenine 2503 in 23S rRNA and position 2 of adenine 37 in tRNAs. In Opitutus terrae (strain DSM 11246 / JCM 15787 / PB90-1), this protein is Probable dual-specificity RNA methyltransferase RlmN 2.